Reading from the N-terminus, the 376-residue chain is MEMATKKCNIFGVDSIGEPEGVVKKALDESLSLLDIFKFIEITNFDLDPIMTNWFWQVMVNNHSTHLGRVVLEWFGYEGEDSNQKQKFIDMLKRNKIPYKQLKHTDNEIELYPSIKEEMTLLPHKGAIASSKWLVMEPFNIKMAMLRLNTKNADIIKRYYIKMEELIRLYAQYTTLFQKREKETMSREMLDLRLMMEDMKITNHRQENMLIESHNMLRSMGVEIKDIRHENNDLLDQNNELLERVDDVLQKVNTVQKKLDISVEDRAPQPDKNTRRERFLLLKRNNDTFPYYTIRAQEINARKALKRQRNMYTDVTVLLDIVCHPNTKTFYVRIKDDLKSKGVEFNLCEINISNSNIDEAILVKEMMKINDKKRDV.

Residues 178 to 261 (QKREKETMSR…VNTVQKKLDI (84 aa)) adopt a coiled-coil conformation.

The chain is Putative MSV199 domain-containing protein 468L from Invertebrate iridescent virus 6 (IIV-6).